A 401-amino-acid chain; its full sequence is 1-deoxy-D-xylulose 5-phosphate reductoisomerase (401 aa).

7 residues coordinate NADPH: threonine 11, glycine 12, serine 13, isoleucine 14, arginine 38, asparagine 39, and asparagine 125. Lysine 126 is a binding site for 1-deoxy-D-xylulose 5-phosphate. Glutamate 127 contacts NADPH. Position 151 (aspartate 151) interacts with Mn(2+). Serine 152, glutamate 153, serine 179, and histidine 202 together coordinate 1-deoxy-D-xylulose 5-phosphate. Glutamate 153 lines the Mn(2+) pocket. An NADPH-binding site is contributed by glycine 208. 1-deoxy-D-xylulose 5-phosphate is bound by residues serine 215, asparagine 220, lysine 221, and glutamate 224. Glutamate 224 lines the Mn(2+) pocket.

It belongs to the DXR family. It depends on Mg(2+) as a cofactor. Requires Mn(2+) as cofactor.

The catalysed reaction is 2-C-methyl-D-erythritol 4-phosphate + NADP(+) = 1-deoxy-D-xylulose 5-phosphate + NADPH + H(+). The protein operates within isoprenoid biosynthesis; isopentenyl diphosphate biosynthesis via DXP pathway; isopentenyl diphosphate from 1-deoxy-D-xylulose 5-phosphate: step 1/6. Functionally, catalyzes the NADPH-dependent rearrangement and reduction of 1-deoxy-D-xylulose-5-phosphate (DXP) to 2-C-methyl-D-erythritol 4-phosphate (MEP). The sequence is that of 1-deoxy-D-xylulose 5-phosphate reductoisomerase from Paraburkholderia phymatum (strain DSM 17167 / CIP 108236 / LMG 21445 / STM815) (Burkholderia phymatum).